We begin with the raw amino-acid sequence, 455 residues long: Pentatricopeptide repeat-containing protein At3g26630, chloroplastic (455 aa).

Residues 1-19 constitute a chloroplast transit peptide; sequence MAAPSPSSPPNLLSPPPFR. PPR repeat units lie at residues 51–81, 82–117, 118–152, 153–187, 188–214, 215–249, 250–284, 285–315, 316–350, 352–387, and 388–418; these read DQLL…LQSP, STFT…QSQF, DKFT…GFFN, DVFF…SIVS, WTTM…MPMR, NVVS…DVKP, NEFT…GFVL, DCFL…MQGK, SLAT…ASVE, DAIT…GISP, and IREH…MDSD.

Belongs to the PPR family. PCMP-A subfamily.

It localises to the plastid. The protein localises to the chloroplast. This Arabidopsis thaliana (Mouse-ear cress) protein is Pentatricopeptide repeat-containing protein At3g26630, chloroplastic (PCMP-A6).